We begin with the raw amino-acid sequence, 119 residues long: Anther-specific protein BCP1 (119 aa).

The N-terminal stretch at 1-23 (MGRQNVVVVFGLVFLAVLGLAAA) is a signal peptide. Over residues 24-42 (ASSPSPSASPSKAPSTSTP) the composition is skewed to low complexity. The interval 24-95 (ASSPSPSASP…PSGSADSADS (72 aa)) is disordered. Residues 24–98 (ASSPSPSASP…SADSADSGAA (75 aa)) lie on the Extracellular side of the membrane. The span at 56–69 (TDDDAAASPGDDDV) shows a compositional bias: acidic residues. Over residues 82 to 95 (GSNGPSGSADSADS) the composition is skewed to low complexity. A helical transmembrane segment spans residues 99–118 (ALGVSAVVVGVTSIVGSFLF). Phe119 is a topological domain (cytoplasmic).

As to expression, expressed in mature pollen grains, developing microspores and tapetal cells.

It is found in the membrane. Functionally, required for pollen fertility and development. Active in both diploid tapetum and haploid microspores. Major pollen protein. This chain is Anther-specific protein BCP1 (BCP1), found in Brassica campestris (Field mustard).